We begin with the raw amino-acid sequence, 745 residues long: Class E vacuolar protein-sorting machinery protein hse1 (745 aa).

The region spanning 17–146 (ATDENLTSED…RLKQSNPTLQ (130 aa)) is the VHS domain. The segment at 142-237 (NPTLQPPSAP…PQPVPSSTTA (96 aa)) is disordered. The UIM domain maps to 163 to 182 (KEEEELQMALQLSLQEEERK). The segment covering 186–214 (AGASGATASSSSGGAAAGPSNAGGAVASG) has biased composition (low complexity). The 60-residue stretch at 238 to 297 (ATVSRVRALYDFVPSEPGELEFKKGDVIAVLKSVYKDWWSGSLKGKTGIFPLNYVEKLAD) folds into the SH3 domain. Residues 390-745 (SSMSHPPGPT…GLADYYRSAY (356 aa)) are disordered. Residues 425 to 446 (QQQEPPRFYNPAPAQDAPQYPA) show a composition bias toward low complexity. Polar residues-rich tracts occupy residues 518–532 (LNTT…QYTP) and 540–576 (GANN…TNPL). Over residues 577–590 (SNPSYNAPSAPSYS) the composition is skewed to low complexity. The segment covering 618–635 (APPPPSGPAPSGPAPSAP) has biased composition (pro residues). Over residues 636–647 (SAPSAPSAPGAP) the composition is skewed to low complexity. The span at 648–660 (NSYTQGAYHSQNP) shows a compositional bias: polar residues. Low complexity-rich tracts occupy residues 662–672 (AAAAAAAAAAA) and 719–733 (SAPG…APGQ).

Belongs to the STAM family. In terms of assembly, component of the ESCRT-0 complex composed of hse1 and vps27.

It is found in the endosome membrane. Component of the ESCRT-0 complex which is the sorting receptor for ubiquitinated cargo proteins at the multivesicular body (MVB). The protein is Class E vacuolar protein-sorting machinery protein hse1 (hse1) of Neurospora crassa (strain ATCC 24698 / 74-OR23-1A / CBS 708.71 / DSM 1257 / FGSC 987).